Here is a 321-residue protein sequence, read N- to C-terminus: GTP 3',8-cyclase (321 aa).

Positions 5–233 (SFNRVIDYIR…QGSSKIYTLE (229 aa)) constitute a Radical SAM core domain. Residue R14 participates in GTP binding. [4Fe-4S] cluster contacts are provided by C21 and C25. Y27 lines the S-adenosyl-L-methionine pocket. C28 contacts [4Fe-4S] cluster. R64 contributes to the GTP binding site. G68 is a binding site for S-adenosyl-L-methionine. S95 contributes to the GTP binding site. S119 is a binding site for S-adenosyl-L-methionine. K155 lines the GTP pocket. An S-adenosyl-L-methionine-binding site is contributed by M189. C249 and C252 together coordinate [4Fe-4S] cluster. 254–256 (RIR) contributes to the GTP binding site. C266 provides a ligand contact to [4Fe-4S] cluster.

This sequence belongs to the radical SAM superfamily. MoaA family. In terms of assembly, monomer and homodimer. It depends on [4Fe-4S] cluster as a cofactor.

It catalyses the reaction GTP + AH2 + S-adenosyl-L-methionine = (8S)-3',8-cyclo-7,8-dihydroguanosine 5'-triphosphate + 5'-deoxyadenosine + L-methionine + A + H(+). It functions in the pathway cofactor biosynthesis; molybdopterin biosynthesis. Functionally, catalyzes the cyclization of GTP to (8S)-3',8-cyclo-7,8-dihydroguanosine 5'-triphosphate. The protein is GTP 3',8-cyclase of Helicobacter pylori (strain ATCC 700392 / 26695) (Campylobacter pylori).